We begin with the raw amino-acid sequence, 79 residues long: Sec-independent protein translocase protein TatA (79 aa).

A helical membrane pass occupies residues 1–21 (MGSLSIWHWIVVIAVVLLLFG). The segment covering 43 to 60 (LQDDEKTAEKPDPVKSID) has biased composition (basic and acidic residues). Residues 43–79 (LQDDEKTAEKPDPVKSIDHNAPTAAAPTRTDVGSKAV) are disordered.

This sequence belongs to the TatA/E family. In terms of assembly, the Tat system comprises two distinct complexes: a TatABC complex, containing multiple copies of TatA, TatB and TatC subunits, and a separate TatA complex, containing only TatA subunits. Substrates initially bind to the TatABC complex, which probably triggers association of the separate TatA complex to form the active translocon.

Its subcellular location is the cell inner membrane. Functionally, part of the twin-arginine translocation (Tat) system that transports large folded proteins containing a characteristic twin-arginine motif in their signal peptide across membranes. TatA could form the protein-conducting channel of the Tat system. The chain is Sec-independent protein translocase protein TatA from Rhodopseudomonas palustris (strain BisB5).